We begin with the raw amino-acid sequence, 644 residues long: Acetyl-coenzyme A synthetase 2 (644 aa).

Residues 189–192 (RGGK), T307, and N331 contribute to the CoA site. ATP is bound by residues 383 to 385 (GEP), 407 to 412 (DTWWQT), D496, and R511. Residue S519 coordinates CoA. R522 is an ATP binding site. Mg(2+) contacts are provided by V533, H535, and V538. K605 is modified (N6-acetyllysine).

It belongs to the ATP-dependent AMP-binding enzyme family. It depends on Mg(2+) as a cofactor. Acetylated. Deacetylation by the SIR2-homolog deacetylase activates the enzyme.

It catalyses the reaction acetate + ATP + CoA = acetyl-CoA + AMP + diphosphate. Functionally, catalyzes the conversion of acetate into acetyl-CoA (AcCoA), an essential intermediate at the junction of anabolic and catabolic pathways. AcsA undergoes a two-step reaction. In the first half reaction, AcsA combines acetate with ATP to form acetyl-adenylate (AcAMP) intermediate. In the second half reaction, it can then transfer the acetyl group from AcAMP to the sulfhydryl group of CoA, forming the product AcCoA. The protein is Acetyl-coenzyme A synthetase 2 of Pseudomonas putida (strain ATCC 47054 / DSM 6125 / CFBP 8728 / NCIMB 11950 / KT2440).